Here is a 431-residue protein sequence, read N- to C-terminus: Adenylosuccinate synthetase (431 aa).

GTP-binding positions include 13–19 (GDEGKGK) and 41–43 (GHT). The active-site Proton acceptor is Asp-14. 2 residues coordinate Mg(2+): Asp-14 and Gly-41. IMP-binding positions include 14–17 (DEGK), 39–42 (NAGH), Thr-130, Arg-144, Gln-225, Thr-240, and Arg-304. The active-site Proton donor is the His-42. Substrate is bound at residue 300-306 (ATTGRQR). GTP contacts are provided by residues Arg-306, 332-334 (KLD), and 414-416 (STG).

This sequence belongs to the adenylosuccinate synthetase family. In terms of assembly, homodimer. Mg(2+) is required as a cofactor.

Its subcellular location is the cytoplasm. The catalysed reaction is IMP + L-aspartate + GTP = N(6)-(1,2-dicarboxyethyl)-AMP + GDP + phosphate + 2 H(+). It participates in purine metabolism; AMP biosynthesis via de novo pathway; AMP from IMP: step 1/2. In terms of biological role, plays an important role in the de novo pathway of purine nucleotide biosynthesis. Catalyzes the first committed step in the biosynthesis of AMP from IMP. The chain is Adenylosuccinate synthetase from Saccharophagus degradans (strain 2-40 / ATCC 43961 / DSM 17024).